The following is a 249-amino-acid chain: MGSRHSTYAHRPFSKRRKADDTEDSLAEREQQEAIAQFPYVEFTGRDSITCLTCQGTGYIPEQVNELVALIPHSDQRLRPQRTKQYVLLSILLCLLASGLVVFFLFPHSVLVDDDGIKVVKVTFDEQRSLVILAITATLKIRNSNFYSVAVTSLSSEVQYMNTVVGSYTTTNISLIPPRSEHLVNFTAKAEMGGPYSYVYFFCTLPYIGVHNVVVFVRTSVKISYIGHVTQSSLETHHYVDCGVNSTAV.

The interval 1–26 (MGSRHSTYAHRPFSKRRKADDTEDSL) is disordered. G2 carries the N-myristoyl glycine lipid modification. Helical transmembrane passes span 86 to 106 (YVLLSILLCLLASGLVVFFLF) and 197 to 217 (SYVYFFCTLPYIGVHNVVVFV).

This sequence belongs to the TMEM106 family. In terms of assembly, interacts with TMEM106B.

It localises to the endoplasmic reticulum membrane. It is found in the membrane. The sequence is that of Transmembrane protein 106C (TMEM106C) from Bos taurus (Bovine).